The sequence spans 543 residues: Chaperonin GroEL 2 (543 aa).

ATP is bound by residues 29–32, 86–90, Gly-413, and Asp-495; these read TLGP and DGTTT. The tract at residues 524–543 is disordered; that stretch reads KPEPKENAPTGAGMGGDFDY.

This sequence belongs to the chaperonin (HSP60) family. As to quaternary structure, forms a cylinder of 14 subunits composed of two heptameric rings stacked back-to-back. Interacts with the co-chaperonin GroES.

The protein resides in the cytoplasm. It catalyses the reaction ATP + H2O + a folded polypeptide = ADP + phosphate + an unfolded polypeptide.. Functionally, together with its co-chaperonin GroES, plays an essential role in assisting protein folding. The GroEL-GroES system forms a nano-cage that allows encapsulation of the non-native substrate proteins and provides a physical environment optimized to promote and accelerate protein folding. In Acaryochloris marina (strain MBIC 11017), this protein is Chaperonin GroEL 2.